The sequence spans 118 residues: UPF0342 protein BAMEG_3696 (118 aa).

Belongs to the UPF0342 family.

This Bacillus anthracis (strain CDC 684 / NRRL 3495) protein is UPF0342 protein BAMEG_3696.